We begin with the raw amino-acid sequence, 246 residues long: MRYKIVIEYDGSNFIGWQKQNHNSNSIQEILEKAIFKFSKQHVTVYGAGRTDAGVHALGQVAHFDLTTDFETYIVRNAINYHLISHAIAVVHVEKTDTDFHARFSAKRRYYLYKIVNRYSPLTIDRNRAWLVHTPLNVENMIKAVCYIKGNHNFSSFRAKCCQSKSPVKTVDNLSITYNHPYIDINISAISFLHHQVRIIVGTLVECGKGYFPPEHIKTIMEANNRSYAGTTAPSYGLYFVKVDYS.

Catalysis depends on Asp-52, which acts as the Nucleophile. Tyr-111 provides a ligand contact to substrate.

This sequence belongs to the tRNA pseudouridine synthase TruA family. Homodimer.

The enzyme catalyses uridine(38/39/40) in tRNA = pseudouridine(38/39/40) in tRNA. In terms of biological role, formation of pseudouridine at positions 38, 39 and 40 in the anticodon stem and loop of transfer RNAs. This is tRNA pseudouridine synthase A from Ehrlichia ruminantium (strain Gardel).